Here is a 363-residue protein sequence, read N- to C-terminus: UV excision repair protein RAD23 homolog A (363 aa).

One can recognise a Ubiquitin-like domain in the interval 1 to 81; that stretch reads MAVTITLKTL…VVVMVTKTKA (81 aa). Residues 81-160 are disordered; that stretch reads AGQGTSAPPE…EDAASTLVTG (80 aa). Residues 85–103 show a composition bias toward low complexity; sequence TSAPPEASPTAAPESSTSF. K122 is covalently cross-linked (Glycyl lysine isopeptide (Lys-Gly) (interchain with G-Cter in ubiquitin)). Phosphoserine occurs at positions 123, 128, 133, 136, and 138. Residues 126-147 show a composition bias toward low complexity; it reads EESAPTTSPESVSGSVPSSGSS. Residues 161 to 201 form the UBA 1 domain; it reads SEYETMLTEIMSMGYERERVVAALRASYNNPHRAVEYLLTG. The tract at residues 203–227 is disordered; sequence PGSPEPEHGSVQESQVSEQPATEAA. Phosphoserine is present on S205. A compositionally biased stretch (polar residues) spans 213–222; it reads VQESQVSEQP. 2 positions are modified to phosphoserine: S295 and S357. One can recognise a UBA 2 domain in the interval 318-358; sequence PQEKEAIERLKALGFPESLVIQAYFACEKNENLAANFLLSQ. The interval 319–363 is HIV-1 vpr binding; the sequence is QEKEAIERLKALGFPESLVIQAYFACEKNENLAANFLLSQNFDDE.

Belongs to the RAD23 family. Interacts with XPC; the interaction is suggesting the existence of a functional equivalent variant XPC complex. Interacts with PSMD4 and PSMC5. Interacts with ATXN3. Interacts with UBQLN2. In terms of assembly, (Microbial infection) Interacts with HIV-1 Vpr.

Its subcellular location is the nucleus. In terms of biological role, multiubiquitin chain receptor involved in modulation of proteasomal degradation. Binds to 'Lys-48'-linked polyubiquitin chains in a length-dependent manner and with a lower affinity to 'Lys-63'-linked polyubiquitin chains. Proposed to be capable to bind simultaneously to the 26S proteasome and to polyubiquitinated substrates and to deliver ubiquitinated proteins to the proteasome. Functionally, involved in nucleotide excision repair and is thought to be functional equivalent for RAD23B in global genome nucleotide excision repair (GG-NER) by association with XPC. In vitro, the XPC:RAD23A dimer has NER activity. Can stabilize XPC. (Microbial infection) Involved in Vpr-dependent replication of HIV-1 in non-proliferating cells and primary macrophages. Required for the association of HIV-1 Vpr with the host proteasome. This is UV excision repair protein RAD23 homolog A (RAD23A) from Homo sapiens (Human).